Consider the following 102-residue polypeptide: Protein transport protein sec61 subunit beta (102 aa).

Polar residues predominate over residues 1-15 (MSSTKASGSVKNSAA). A disordered region spans residues 1–53 (MSSTKASGSVKNSAASAPGGPKSQIRRRAAVEKNTKESNSGPAGARAAGAPGS). The Cytoplasmic portion of the chain corresponds to 1-72 (MSSTKASGSV…DEASGFKVDP (72 aa)). Residues 41-52 (GPAGARAAGAPG) are compositionally biased toward low complexity. Residues 73 to 93 (VVVMVLSVGFIASVFLLHIVA) traverse the membrane as a helical segment.

Belongs to the SEC61-beta family. In terms of assembly, heterotrimeric complex composed of SEC61, SBH1 and SSS1.

Its subcellular location is the endoplasmic reticulum membrane. Functionally, necessary for protein translocation in the endoplasmic reticulum. The polypeptide is Protein transport protein sec61 subunit beta (sbh1) (Schizosaccharomyces pombe (strain 972 / ATCC 24843) (Fission yeast)).